The sequence spans 520 residues: Probable alginate O-acetylase AlgI (520 aa).

The next 10 membrane-spanning stretches (helical) occupy residues 7–24 (VFLF…YLSG), 39–61 (FYAW…NYWI), 78–100 (WLIL…NFGV), 115–137 (FVLT…ISYI), 150–172 (NLID…VLRF), 239–261 (LYFD…GFRF), 311–333 (LFLT…IWGA), 353–375 (VLNP…IFRA), 402–424 (ANLT…FFGL), and 483–505 (WLSQ…ASVL). The active site involves histidine 322.

It belongs to the membrane-bound acyltransferase family.

It localises to the cell inner membrane. The protein operates within glycan biosynthesis; alginate biosynthesis. In terms of biological role, together with AlgJ and AlgF, forms an inner membrane complex which probably interacts with the alginate polymerization-transport complex and adds acetyl groups at the O-2 and O-3 positions of mannuronate residues. Acetylation of alginate is important for the architecture of biofilms and increases resistance to opsonic killing in the host. The polypeptide is Probable alginate O-acetylase AlgI (algI) (Pseudomonas aeruginosa (strain ATCC 15692 / DSM 22644 / CIP 104116 / JCM 14847 / LMG 12228 / 1C / PRS 101 / PAO1)).